Here is a 222-residue protein sequence, read N- to C-terminus: Endonuclease V (222 aa).

Residues aspartate 34 and aspartate 102 each coordinate Mg(2+).

It belongs to the endonuclease V family. Mg(2+) serves as cofactor.

The protein resides in the cytoplasm. The enzyme catalyses Endonucleolytic cleavage at apurinic or apyrimidinic sites to products with a 5'-phosphate.. In terms of biological role, DNA repair enzyme involved in the repair of deaminated bases. Selectively cleaves double-stranded DNA at the second phosphodiester bond 3' to a deoxyinosine leaving behind the intact lesion on the nicked DNA. This Photorhabdus laumondii subsp. laumondii (strain DSM 15139 / CIP 105565 / TT01) (Photorhabdus luminescens subsp. laumondii) protein is Endonuclease V.